A 395-amino-acid polypeptide reads, in one-letter code: Methylmalonyl-CoA decarboxylase subunit beta (395 aa).

The next 9 membrane-spanning stretches (helical) occupy residues 17–37 (LNMGSIIMMLVACVFLYLAIA), 43–63 (LLLVPISFGILLTNLPFAGMM), 103–123 (GIFPPLIFLGVGAMTDFGPLI), 128–148 (SLLLGAAAQFGIFVTFFGAIA), 180–200 (PHLMGPIAVAAYSYMALVPII), 230–250 (IIFPIVVTILVSLIVPPAATL), 278–298 (INIITIFLGVTVGATATAEAF), 304–324 (LAILGLGIVAFGIGTGSGVLL), and 374–394 (GPNVAGVIGSAVSAGVLLSLF).

Belongs to the GcdB/MmdB/OadB family. In terms of assembly, the methylmalonyl-CoA decarboxylase is composed of four subunits: the carboxyltransferase alpha subunit (MmdA), the tunnel beta subunit (MmdB), the biotin-containing gamma subunit (MmdC) and the delta subunit (MmdD). In terms of processing, the N-terminus is blocked.

It is found in the cell membrane. The catalysed reaction is (S)-methylmalonyl-CoA + Na(+)(in) + H(+)(out) = propanoyl-CoA + Na(+)(out) + CO2. Tunnel subunit of the sodium ion pump methylmalonyl-CoA decarboxylase, which converts the chemical energy of a decarboxylation reaction into an electrochemical gradient of Na(+) ions across the cytoplasmic membrane, thereby creating a sodium ion motive force that is used for ATP synthesis. The beta subunit catalyzes the decarboxylation of the carboxybiotin carrier protein and the coupled export of Na(+) ions. The sequence is that of Methylmalonyl-CoA decarboxylase subunit beta from Propionigenium modestum.